Here is a 138-residue protein sequence, read N- to C-terminus: Basic phospholipase A2 vurtoxin (138 aa).

The signal sequence occupies residues 1 to 16; sequence MRTLWIVAVCLIGVEG. Disulfide bonds link Cys42-Cys131, Cys44-Cys60, Cys59-Cys111, Cys65-Cys138, Cys66-Cys104, Cys73-Cys97, and Cys91-Cys102. Residues Tyr43, Gly45, and Gly47 each coordinate Ca(2+). His63 is an active-site residue. Position 64 (Asp64) interacts with Ca(2+). The active site involves Asp105.

Ca(2+) serves as cofactor. As to expression, expressed by the venom gland.

It localises to the secreted. It carries out the reaction a 1,2-diacyl-sn-glycero-3-phosphocholine + H2O = a 1-acyl-sn-glycero-3-phosphocholine + a fatty acid + H(+). In terms of biological role, snake venom phospholipase A2 that may have a strong anticoagulant activity. Is able to suppress the acetylcholine (ACh)-evoked current mediated by alpha-7 (CHRNA7)-similar nAChRs in L.stagnalis neurons (IC(50)=10.5 uM) and to compete with alpha-bungarotoxin for binding to muscle- and alpha-7 neuronal nAChR types, as well as to AChBPs. In inhibition of alpha-bungarotoxin binding, this toxin is mostly active against T.californica nAChR (IC(50)=0.26 uM), it is moderately active against human alpha-7 nAChR (IC(50)=14 uM), and is not active against L.stagnalis and A.californica AChBP (IC(50)&gt;30 uM). The polypeptide is Basic phospholipase A2 vurtoxin (Vipera renardi (Steppe viper)).